A 199-amino-acid chain; its full sequence is MKDNEVFIIGLGNPGKQYIKSRHNIGFLLLETFSKKYDAQFTLKNKLKSRYTEFKINDSIYKLFMPHTYMNNSGDAVKAIVDWYKISLDKVFIIVDDIDLPLGKIRFRKKGSSGGHNGLKDIINKLQTENFNRIKIGIGSPPINETKKQLNTISHVLGNISSQENSTLEKVYQKVIESLEELDIKNEDYIISELNSFHK.

A tRNA-binding site is contributed by Tyr-18. His-23 (proton acceptor) is an active-site residue. 3 residues coordinate tRNA: Tyr-69, Asn-71, and Asn-117.

Belongs to the PTH family. In terms of assembly, monomer.

It localises to the cytoplasm. The enzyme catalyses an N-acyl-L-alpha-aminoacyl-tRNA + H2O = an N-acyl-L-amino acid + a tRNA + H(+). Its function is as follows. Hydrolyzes ribosome-free peptidyl-tRNAs (with 1 or more amino acids incorporated), which drop off the ribosome during protein synthesis, or as a result of ribosome stalling. Catalyzes the release of premature peptidyl moieties from peptidyl-tRNA molecules trapped in stalled 50S ribosomal subunits, and thus maintains levels of free tRNAs and 50S ribosomes. This Prochlorococcus marinus (strain MIT 9515) protein is Peptidyl-tRNA hydrolase.